Reading from the N-terminus, the 146-residue chain is Hemoglobin subunit beta (146 aa).

Positions 2–146 (HWSAEEKQLI…VAHALARKYH (145 aa)) constitute a Globin domain. Heme b is bound by residues His-63 and His-92.

This sequence belongs to the globin family. As to quaternary structure, heterotetramer of two alpha chains and two beta chains. Red blood cells.

Involved in oxygen transport from the lung to the various peripheral tissues. This is Hemoglobin subunit beta (HBB) from Aptenodytes forsteri (Emperor penguin).